Consider the following 1510-residue polypeptide: Cysteine-tryptophan domain-containing zinc finger protein 5 (1510 aa).

The span at tyrosine 174–glutamate 196 shows a compositional bias: polar residues. 4 disordered regions span residues tyrosine 174 to lysine 198, serine 449 to aspartate 497, lysine 555 to aspartate 574, and leucine 582 to isoleucine 616. Basic and acidic residues predominate over residues glycine 454–asparagine 465. Residues glutamine 467–glutamine 476 are compositionally biased toward polar residues. Basic and acidic residues-rich tracts occupy residues proline 479 to aspartate 497 and proline 556 to aspartate 574. The CW-type zinc finger occupies serine 645–threonine 698. Residues cysteine 654, cysteine 657, cysteine 678, and cysteine 690 each contribute to the Zn(2+) site. Residues lysine 768–lysine 780 are compositionally biased toward basic and acidic residues. 3 disordered regions span residues lysine 768–phenylalanine 893, serine 1003–histidine 1050, and leucine 1149–aspartate 1194. The segment covering serine 781 to threonine 790 has biased composition (polar residues). The segment covering asparagine 874–phenylalanine 893 has biased composition (basic and acidic residues). Low complexity predominate over residues serine 1003–serine 1016. Polar residues-rich tracts occupy residues threonine 1026–arginine 1040 and proline 1162–leucine 1182.

As to expression, highly expressed in young panicles. Expressed at low levels in leaf sheaths, nodes, internodes and axillary buds.

The protein resides in the nucleus. In terms of biological role, binds to histones H3K4me1, H3K4me2 and H3K4me3 in GST pull-down assay. May facilitate the recruitment of effectors to mediate gene expression. The sequence is that of Cysteine-tryptophan domain-containing zinc finger protein 5 from Oryza sativa subsp. japonica (Rice).